A 311-amino-acid chain; its full sequence is Olfactory receptor 8H1 (311 aa).

Topologically, residues M1 to M25 are extracellular. N-linked (GlcNAc...) asparagine glycosylation is present at N5. Residues A26–I46 traverse the membrane as a helical segment. Topologically, residues L47–Q54 are cytoplasmic. The helical transmembrane segment at L55–T75 threads the bilayer. The Extracellular portion of the chain corresponds to V76–A98. Cysteines 96 and 188 form a disulfide. The chain crosses the membrane as a helical span at residues Q99–Y119. Topologically, residues D120–R138 are cytoplasmic. Residues L139–V159 form a helical membrane-spanning segment. Residues V160–I196 lie on the Extracellular side of the membrane. The helical transmembrane segment at M197–S216 threads the bilayer. Residues Y217–A236 lie on the Cytoplasmic side of the membrane. Residues L237–T257 traverse the membrane as a helical segment. Residues Y258–D270 are Extracellular-facing. Residues Q271 to L291 form a helical membrane-spanning segment. Topologically, residues R292–R311 are cytoplasmic.

Belongs to the G-protein coupled receptor 1 family.

It localises to the cell membrane. Odorant receptor. This Homo sapiens (Human) protein is Olfactory receptor 8H1 (OR8H1).